A 166-amino-acid chain; its full sequence is Signal peptidase complex catalytic subunit SEC11 (166 aa).

Residues Met1 to Gln9 are Cytoplasmic-facing. Residues Phe10–Ile30 form a helical; Signal-anchor for type II membrane protein membrane-spanning segment. The Lumenal portion of the chain corresponds to Thr31–Glu166. Active-site charge relay system residues include Ser44, His83, and Asp108. The C-terminal short (CTS) helix stretch occupies residues Gly152–Leu163.

It belongs to the peptidase S26B family. In terms of assembly, component of the signal peptidase complex (SPC) composed of a catalytic subunit SEC11 and three accessory subunits SPC1, SPC2 and SPC3. The complex induces a local thinning of the ER membrane which is used to measure the length of the signal peptide (SP) h-region of protein substrates. This ensures the selectivity of the complex towards h-regions shorter than 18-20 amino acids. SPC associates with the translocon complex.

It is found in the endoplasmic reticulum membrane. It carries out the reaction Cleavage of hydrophobic, N-terminal signal or leader sequences from secreted and periplasmic proteins.. Functionally, catalytic component of the signal peptidase complex (SPC) which catalyzes the cleavage of N-terminal signal sequences from nascent proteins as they are translocated into the lumen of the endoplasmic reticulum. Specifically cleaves N-terminal signal peptides that contain a hydrophobic alpha-helix (h-region) shorter than 18-20 amino acids. This chain is Signal peptidase complex catalytic subunit SEC11 (SEC11), found in Scheffersomyces stipitis (strain ATCC 58785 / CBS 6054 / NBRC 10063 / NRRL Y-11545) (Yeast).